The primary structure comprises 450 residues: 6-phospho-beta-glucosidase (450 aa).

5-73 (LKVVTIGGGS…VPMKLYKTLD (69 aa)) contacts NAD(+). 2 residues coordinate substrate: Arg96 and Asn150. Mn(2+)-binding residues include Cys172 and His203. The active-site Proton acceptor is the Tyr258.

As to quaternary structure, homotetramer. NAD(+) is required as a cofactor. The cofactor is Mn(2+). It depends on Co(2+) as a cofactor. Requires Ni(2+) as cofactor.

It carries out the reaction 6-phospho-beta-D-glucosyl-(1-&gt;4)-D-glucose + H2O = D-glucose 6-phosphate + D-glucose. Its function is as follows. Hydrolyzes a wide variety of P-beta-glucosides including cellobiose-6P, salicin-6P, arbutin-6P, gentiobiose-6P, methyl-beta-glucoside-6P and p-nitrophenyl-beta-D-glucopyranoside-6P. Is also able to hydrolyze phospho-N,N'-diacetylchitobiose. The chain is 6-phospho-beta-glucosidase (chbF) from Escherichia coli (strain K12).